The chain runs to 699 residues: Elongation factor G (699 aa).

The 276-residue stretch at 8-283 (EHIRNIGICA…AVVDFLPSPI (276 aa)) folds into the tr-type G domain. GTP is bound by residues 17–24 (AHIDAGKT), 81–85 (DTPGH), and 135–138 (NKMD).

This sequence belongs to the TRAFAC class translation factor GTPase superfamily. Classic translation factor GTPase family. EF-G/EF-2 subfamily.

It localises to the cytoplasm. Catalyzes the GTP-dependent ribosomal translocation step during translation elongation. During this step, the ribosome changes from the pre-translocational (PRE) to the post-translocational (POST) state as the newly formed A-site-bound peptidyl-tRNA and P-site-bound deacylated tRNA move to the P and E sites, respectively. Catalyzes the coordinated movement of the two tRNA molecules, the mRNA and conformational changes in the ribosome. The polypeptide is Elongation factor G (Rickettsia peacockii (strain Rustic)).